A 277-amino-acid chain; its full sequence is MDLLTLFKVLILGAVEGLTEFLPISSTGHQIIVADLLEFGGERAMAFNIIIQLGAILAVVWEFRPKIFEIVKGLPTQSNAQRFTRNLLIAFFPAVILGVLFADTIHEYLFNPITVAVALVVGGIVMLWAEQRDHVVSVDHVDDMKWADALKIGCVQCLAMIPGTSRSGSTIIGGLLFGLSRKAATEFSFFLAMPTMVGAAVYSGYKYRELFQSSDLPVFALGFVVAFIFAMIAVRGLLKFIANHSYATFAWYRIAFGLLILATWQFGWVNWTAAAAA.

Transmembrane regions (helical) follow at residues 43–63, 87–107, 109–129, 183–203, 214–234, and 254–274; these read RAMAFNIIIQLGAILAVVWEF, LLIAFFPAVILGVLFADTIHE, LFNPITVAVALVVGGIVMLWA, AATEFSFFLAMPTMVGAAVYS, SDLPVFALGFVVAFIFAMIAV, and IAFGLLILATWQFGWVNWTAA.

Belongs to the UppP family.

It is found in the cell inner membrane. The catalysed reaction is di-trans,octa-cis-undecaprenyl diphosphate + H2O = di-trans,octa-cis-undecaprenyl phosphate + phosphate + H(+). Catalyzes the dephosphorylation of undecaprenyl diphosphate (UPP). Confers resistance to bacitracin. The protein is Undecaprenyl-diphosphatase 2 of Pseudomonas fluorescens (strain Pf0-1).